A 282-amino-acid chain; its full sequence is Homeobox protein Hox-C12 (282 aa).

Disordered stretches follow at residues 94 to 129 and 147 to 214; these read YYRE…PLEP and GGDG…NSRS. Over residues 162–175 the composition is skewed to low complexity; the sequence is SCQSLESDSSSSLL. The homeobox DNA-binding region spans 214–273; that stretch reads SRKKRKPYSKLQLAELEGEFLVNEFITRQRRRELSDRLNLSDQQVKIWFQNRRMKKKRLL.

It belongs to the Abd-B homeobox family.

The protein resides in the nucleus. Sequence-specific transcription factor which is part of a developmental regulatory system that provides cells with specific positional identities on the anterior-posterior axis. In Homo sapiens (Human), this protein is Homeobox protein Hox-C12 (HOXC12).